The following is a 202-amino-acid chain: Small ribosomal subunit protein uS5 (202 aa).

Residues 1–13 are compositionally biased toward gly residues; it reads MPGQQRRGGGSGG. Positions 1–31 are disordered; it reads MPGQQRRGGGSGGSDRRERRDRSGSGPAQEK. Over residues 14–23 the composition is skewed to basic and acidic residues; that stretch reads SDRRERRDRS. Residues 34–97 form the S5 DRBM domain; that stretch reads YVERVVAINR…EEAKKHFFKV (64 aa).

This sequence belongs to the universal ribosomal protein uS5 family. As to quaternary structure, part of the 30S ribosomal subunit. Contacts proteins S4 and S8.

In terms of biological role, with S4 and S12 plays an important role in translational accuracy. Located at the back of the 30S subunit body where it stabilizes the conformation of the head with respect to the body. The protein is Small ribosomal subunit protein uS5 of Frankia casuarinae (strain DSM 45818 / CECT 9043 / HFP020203 / CcI3).